The sequence spans 156 residues: E3 ubiquitin-protein ligase RNF181 (156 aa).

An RING-type; atypical zinc finger spans residues 79-120 (CPVCLLEFEEGETVRQLPCEHLFHSACILPWLGKTNSCPLCR).

The protein belongs to the RNF181 family.

The enzyme catalyses S-ubiquitinyl-[E2 ubiquitin-conjugating enzyme]-L-cysteine + [acceptor protein]-L-lysine = [E2 ubiquitin-conjugating enzyme]-L-cysteine + N(6)-ubiquitinyl-[acceptor protein]-L-lysine.. It functions in the pathway protein modification; protein ubiquitination. E3 ubiquitin-protein ligase which accepts ubiquitin from an E2 ubiquitin-conjugating enzyme in the form of a thioester and then directly transfers the ubiquitin to targeted substrates. Catalyzes monoubiquitination of 26S proteasome subunit PSMC2/RPT1. This Xenopus laevis (African clawed frog) protein is E3 ubiquitin-protein ligase RNF181 (rnf181).